A 254-amino-acid chain; its full sequence is Alcohol dehydrogenase (254 aa).

10–33 (FVAGLGGIGFDTSREIVKSGPKNL) is a binding site for NAD(+). A substrate-binding site is contributed by serine 138. The Proton acceptor role is filled by tyrosine 151.

The protein belongs to the short-chain dehydrogenases/reductases (SDR) family. In terms of assembly, homodimer.

The catalysed reaction is a primary alcohol + NAD(+) = an aldehyde + NADH + H(+). It catalyses the reaction a secondary alcohol + NAD(+) = a ketone + NADH + H(+). The polypeptide is Alcohol dehydrogenase (Adh) (Drosophila mayaguana (Fruit fly)).